The following is a 179-amino-acid chain: ECF RNA polymerase sigma factor SigF (179 aa).

Positions 33–93 are sigma-70 factor domain-2; it reads RLRAYFMRRM…KLIDHWRRRK (61 aa). The short motif at 51 to 64 is the Polymerase core binding element; the sequence is DLVQETLLAVHLKR. The segment at 123-170 is sigma-70 factor domain-4; the sequence is ALASLPQRQRMLVSDVKLTGLSLAEAGARAGISEGAAKVALHRALKAL. Residues 145-164 constitute a DNA-binding region (H-T-H motif); it reads LAEAGARAGISEGAAKVALH.

This sequence belongs to the sigma-70 factor family. ECF subfamily.

It is found in the cytoplasm. Its function is as follows. Sigma factors are initiation factors that promote the attachment of RNA polymerase to specific initiation sites and are then released. Extracytoplasmic function (ECF) sigma factors are held in an inactive form by a cognate anti-sigma factor (NrsF in this case) until they are released. Up-regulates expression of 4 operons (sigF-nrsF, CCNA_02834, CCNA_03001 to CCNA_02999 and CCNA_03363 to CCNA_03366) in response to potassium dichromate (K(2)Cr(2)O(7)) or cadmium chloride (CdCl(2)). Overexpression of sigF leads to higher expression of its regulon. In Caulobacter vibrioides (strain NA1000 / CB15N) (Caulobacter crescentus), this protein is ECF RNA polymerase sigma factor SigF.